The following is a 635-amino-acid chain: Biosynthetic arginine decarboxylase (635 aa).

N6-(pyridoxal phosphate)lysine is present on lysine 100. Substrate is bound at residue 282 to 292; it reads VDIGGGLGVDY.

The protein belongs to the Orn/Lys/Arg decarboxylase class-II family. SpeA subfamily. It depends on Mg(2+) as a cofactor. Pyridoxal 5'-phosphate is required as a cofactor.

It catalyses the reaction L-arginine + H(+) = agmatine + CO2. Its pathway is amine and polyamine biosynthesis; agmatine biosynthesis; agmatine from L-arginine: step 1/1. Functionally, catalyzes the biosynthesis of agmatine from arginine. The protein is Biosynthetic arginine decarboxylase of Geobacter metallireducens (strain ATCC 53774 / DSM 7210 / GS-15).